We begin with the raw amino-acid sequence, 313 residues long: Pseudouridine-5'-phosphate glycosidase (313 aa).

Catalysis depends on glutamate 34, which acts as the Proton donor. 2 residues coordinate substrate: lysine 95 and valine 115. Aspartate 147 is a Mn(2+) binding site. Residue 149-151 participates in substrate binding; sequence SAD. Lysine 168 (nucleophile) is an active-site residue.

This sequence belongs to the pseudouridine-5'-phosphate glycosidase family. In terms of assembly, homotrimer. The cofactor is Mn(2+).

The enzyme catalyses D-ribose 5-phosphate + uracil = psi-UMP + H2O. Its function is as follows. Catalyzes the reversible cleavage of pseudouridine 5'-phosphate (PsiMP) to ribose 5-phosphate and uracil. Functions biologically in the cleavage direction, as part of a pseudouridine degradation pathway. This is Pseudouridine-5'-phosphate glycosidase from Deinococcus radiodurans (strain ATCC 13939 / DSM 20539 / JCM 16871 / CCUG 27074 / LMG 4051 / NBRC 15346 / NCIMB 9279 / VKM B-1422 / R1).